Reading from the N-terminus, the 124-residue chain is Hemoglobin subunit alpha (124 aa).

Residues 1-124 (PLSAADKTII…VAKALSSHYR (124 aa)) form the Globin domain. Residue His57 coordinates O2. His79 contacts heme b.

The protein belongs to the globin family. In terms of assembly, hb 1 is a heterotetramer of two alpha and two beta-1 chains. Hb 2 is a heterotetramer of two alpha and two beta-2 chains. Hb 3 is a heterotetramer of two alpha and two beta-3 chains. Red blood cells (at protein level).

Its function is as follows. Involved in oxygen transport from gills to the various peripheral tissues. In Somniosus microcephalus (Greenland sleeper shark), this protein is Hemoglobin subunit alpha.